The sequence spans 859 residues: Photoactivated adenylate cyclase subunit beta-like protein FB (859 aa).

The region spanning 56 to 149 (LRRLMYLSKS…GRMYGDWHMK (94 aa)) is the BLUF 1 domain. The Guanylate cyclase 1 domain occupies 205-333 (VVTFIYLVEF…DCINTTSRIA (129 aa)). The tract at residues 414–449 (GLPNSQRPPIFDDTPKANRRPRTPGYGGRQRSDSQV) is disordered. One can recognise a BLUF 2 domain in the interval 471–563 (LTTLTYISQA…RVYPSEWTLT (93 aa)). The region spanning 619 to 748 (VMLATDICSF…AVSARVMEVE (130 aa)) is the Guanylate cyclase 2 domain. The disordered stretch occupies residues 813 to 859 (AARSGEKPLTEPEAAKPDFRVSPGRVRHGDSGRRSNSAQGKRSIQVR). Over residues 815–831 (RSGEKPLTEPEAAKPDF) the composition is skewed to basic and acidic residues. Residues 846–859 (RSNSAQGKRSIQVR) are compositionally biased toward polar residues.

It belongs to the adenylyl cyclase class-4/guanylyl cyclase family. As to quaternary structure, heterotetramer of two alpha and two beta subunits.

It localises to the cell projection. Its subcellular location is the cilium. It is found in the flagellum. The protein is Photoactivated adenylate cyclase subunit beta-like protein FB of Euglena gracilis.